The chain runs to 300 residues: D-alanine--D-alanine ligase (300 aa).

Positions 99–293 constitute an ATP-grasp domain; the sequence is KKILKYANIN…FAELLNSIVK (195 aa). 126–181 lines the ATP pocket; it reads IEKIGYPVFVKPNSGGSSVATNLVKDKEGIKEAVELALKYDKEVMIENYTKGEEIT. Mg(2+) contacts are provided by D248, E260, and N262.

The protein belongs to the D-alanine--D-alanine ligase family. Mg(2+) is required as a cofactor. The cofactor is Mn(2+).

It localises to the cytoplasm. It carries out the reaction 2 D-alanine + ATP = D-alanyl-D-alanine + ADP + phosphate + H(+). It functions in the pathway cell wall biogenesis; peptidoglycan biosynthesis. Cell wall formation. The sequence is that of D-alanine--D-alanine ligase from Clostridium botulinum (strain Okra / Type B1).